Reading from the N-terminus, the 275-residue chain is Large ribosomal subunit protein uL2 (275 aa).

Residues 220 to 275 (VRGAAMNPRDHPHGGGEGRAPRGMPTPKTKWGKPARGVKTRHNPRTDPFIIRRRTR) form a disordered region. Basic and acidic residues predominate over residues 227–239 (PRDHPHGGGEGRA). The span at 249 to 262 (KWGKPARGVKTRHN) shows a compositional bias: basic residues.

The protein belongs to the universal ribosomal protein uL2 family. In terms of assembly, part of the 50S ribosomal subunit. Forms a bridge to the 30S subunit in the 70S ribosome.

Functionally, one of the primary rRNA binding proteins. Required for association of the 30S and 50S subunits to form the 70S ribosome, for tRNA binding and peptide bond formation. It has been suggested to have peptidyltransferase activity; this is somewhat controversial. Makes several contacts with the 16S rRNA in the 70S ribosome. This Roseiflexus sp. (strain RS-1) protein is Large ribosomal subunit protein uL2.